The sequence spans 368 residues: Alanine racemase (368 aa).

Residue Lys40 is the Proton acceptor; specific for D-alanine of the active site. Residue Lys40 is modified to N6-(pyridoxal phosphate)lysine. Arg134 is a substrate binding site. Tyr263 acts as the Proton acceptor; specific for L-alanine in catalysis. Met310 is a binding site for substrate.

It belongs to the alanine racemase family. Requires pyridoxal 5'-phosphate as cofactor.

It carries out the reaction L-alanine = D-alanine. It functions in the pathway amino-acid biosynthesis; D-alanine biosynthesis; D-alanine from L-alanine: step 1/1. Functionally, catalyzes the interconversion of L-alanine and D-alanine. May also act on other amino acids. The chain is Alanine racemase (alr) from Listeria monocytogenes serotype 4b (strain F2365).